Consider the following 830-residue polypeptide: Periplasmic nitrate reductase 2 (830 aa).

Residues Met-1–Asn-31 constitute a signal peptide (tat-type signal). The region spanning Ile-41–Asp-97 is the 4Fe-4S Mo/W bis-MGD-type domain. Residues Cys-48, Cys-51, Cys-55, and Cys-83 each contribute to the [4Fe-4S] cluster site. Mo-bis(molybdopterin guanine dinucleotide)-binding positions include Lys-85, Gln-152, Asn-177, Cys-181, Ser-245–His-249, Gln-264–Asp-266, Met-374, Gln-378, Asn-484, Ser-510–Glu-511, Lys-533, Asp-560, and Thr-720–Ser-729. Residue Trp-796 participates in substrate binding. Asn-804 and Lys-821 together coordinate Mo-bis(molybdopterin guanine dinucleotide).

This sequence belongs to the prokaryotic molybdopterin-containing oxidoreductase family. NasA/NapA/NarB subfamily. In terms of assembly, component of the periplasmic nitrate reductase NapAB complex composed of NapA and NapB. [4Fe-4S] cluster is required as a cofactor. Requires Mo-bis(molybdopterin guanine dinucleotide) as cofactor. Predicted to be exported by the Tat system. The position of the signal peptide cleavage has not been experimentally proven.

The protein localises to the periplasm. The catalysed reaction is 2 Fe(II)-[cytochrome] + nitrate + 2 H(+) = 2 Fe(III)-[cytochrome] + nitrite + H2O. Functionally, catalytic subunit of the periplasmic nitrate reductase complex NapAB. Receives electrons from NapB and catalyzes the reduction of nitrate to nitrite. The chain is Periplasmic nitrate reductase 2 from Photobacterium profundum (strain SS9).